Consider the following 189-residue polypeptide: Interferon alpha-14 (189 aa).

The first 23 residues, 1–23 (MALPFALMMALVVLSCKSSCSLG), serve as a signal peptide directing secretion. 2 disulfides stabilise this stretch: Cys24/Cys122 and Cys52/Cys162. A glycan (N-linked (GlcNAc...) asparagine) is linked at Asn95.

This sequence belongs to the alpha/beta interferon family.

Its subcellular location is the secreted. Its function is as follows. Produced by macrophages, IFN-alpha have antiviral activities. Interferon stimulates the production of two enzymes: a protein kinase and an oligoadenylate synthetase. This chain is Interferon alpha-14 (IFNA14), found in Homo sapiens (Human).